Reading from the N-terminus, the 688-residue chain is MAKIRVYELAKELNISSKELITLLEEEFSVEVKNHMSAIEDEDANLIKELLSGKEKSEKTKEEDDEIETTAKNPIKESTNNKKPNKRDDKNEKVNTENAEDMAIITITSETITVKEISDKLEKSYAEVIKELMLMGVMASVNQEINFEMAEKLAAKFDTEILREDEDEEDDLEDILRDNEEEEYLQKRSPIITVMGHVDHGKTSLLDAIRKSKVTSTEAGGITQHIGAYTVELNGEAITFLDTPGHAAFTAMRARGAQVTDIVILVVAADDGIMPQTQEAISHCKAANVPLIVAINKIDRPGANIDKVKQELTEYGLVAEDWGGDTICVPVSAHTKEGIDDLLEMILLSSEILELKANPNRKAKGTVVEAKLDKGRGPVATLLIQNGTLRVGDSIVVGSTYGRIRAMFNDKGRNIKSAGPSTPVEILGLSEVPEAGDKFYQVKEEKTARSIADKRKEKIRDEYLQSTHKVSLEDLYNQIQEGTVKELGLIVKADVQGSVEALKQSLEKLSTGEVKVRVIHGGVGAINETDVTLATASNGIILGFNVRPDNNAIIASEKDGVDIKTYRVIYDAIEDIKSAMLGMLEPEFKEVVIGTAEVRQVYKISSVGTIAGAYIQTGKLARNAGARVIRDGIVIFESELASLKRFKDDAKEVAQGYECGLSIEKFNDIKEGDIIECFIMEEIKKKTL.

A disordered region spans residues 54 to 95; it reads KEKSEKTKEEDDEIETTAKNPIKESTNNKKPNKRDDKNEKVN. A compositionally biased stretch (basic and acidic residues) spans 86–95; sequence KRDDKNEKVN. One can recognise a tr-type G domain in the interval 187–354; sequence KRSPIITVMG…MILLSSEILE (168 aa). The interval 196–203 is G1; that stretch reads GHVDHGKT. 196 to 203 is a binding site for GTP; sequence GHVDHGKT. A G2 region spans residues 221–225; it reads GITQH. A G3 region spans residues 242-245; it reads DTPG. GTP contacts are provided by residues 242-246 and 296-299; these read DTPGH and NKID. The segment at 296-299 is G4; that stretch reads NKID. Residues 332–334 form a G5 region; that stretch reads SAH.

It belongs to the TRAFAC class translation factor GTPase superfamily. Classic translation factor GTPase family. IF-2 subfamily.

The protein localises to the cytoplasm. Its function is as follows. One of the essential components for the initiation of protein synthesis. Protects formylmethionyl-tRNA from spontaneous hydrolysis and promotes its binding to the 30S ribosomal subunits. Also involved in the hydrolysis of GTP during the formation of the 70S ribosomal complex. This is Translation initiation factor IF-2 from Clostridium botulinum (strain Okra / Type B1).